The sequence spans 191 residues: Scytalone dehydratase PfmaJ (191 aa).

Residues Tyr25, Tyr45, and Phe48 each contribute to the substrate site. Active-site residues include His80 and His105. Asn126 lines the substrate pocket.

The protein belongs to the scytalone dehydratase family. Homotrimer. Each subunit contains an active site, located in the central part of the hydrophobic core of the monomer, which functions independently.

It localises to the endosome. The enzyme catalyses scytalone = 1,3,8-trihydroxynaphthalene + H2O. It participates in pigment biosynthesis; melanin biosynthesis. Its function is as follows. Scytalone dehydratase involved the biosynthesis of dihydroxynaphthalene (DHN)-melanin, a bluish-green pigment forming a dark layer in the conidial wall that protects the conidia from UV radiations. The first step of the pathway is the production of the pentaketide 1,3,6,8-tetrahydroxynaphthalene (1,3,6,8-THN or T4HN) by the polyketide synthase PfmaE though condensation of acetyl-CoA with malonyl-CoA. T4HN is not stable and easily oxidizes into the stable form flaviolin. T4HN is also substrate of the hydroxynaphthalene reductase PfmaG to yield scytalone. The scytalone dehydratase PfmaJ then reduces scytalone to 1,3,8-THN. 1,3,8-THN is then substrate of the hydroxynaphthalene reductase PfmaI to yield vermelone. Vermelone is further converted by the multicopper oxidase PfmaD to 1,8-DHN. Finally the laccase PFICI_06862 transforms 1,8-DHN to DHN-melanin. The roles of the 5-oxoprolinase PfmaA and the proline iminopeptidase PfmaB within the cluster have not been elucidated yet. This is Scytalone dehydratase PfmaJ from Pestalotiopsis fici (strain W106-1 / CGMCC3.15140).